The chain runs to 296 residues: Probable endonuclease 4 (296 aa).

Residues histidine 68, histidine 109, glutamate 144, aspartate 178, histidine 181, histidine 213, aspartate 226, histidine 228, and glutamate 258 each coordinate Zn(2+).

Belongs to the AP endonuclease 2 family. Zn(2+) serves as cofactor.

The enzyme catalyses Endonucleolytic cleavage to 5'-phosphooligonucleotide end-products.. Functionally, endonuclease IV plays a role in DNA repair. It cleaves phosphodiester bonds at apurinic or apyrimidinic (AP) sites, generating a 3'-hydroxyl group and a 5'-terminal sugar phosphate. The chain is Probable endonuclease 4 from Staphylococcus aureus (strain MRSA252).